We begin with the raw amino-acid sequence, 1405 residues long: ATP-dependent helicase/nuclease subunit A (1405 aa).

One can recognise a UvrD-like helicase ATP-binding domain in the interval 7 to 482 (REWTPDQLAA…ILLKANFRSR (476 aa)). 28–35 (AAAGAGKT) contacts ATP. The UvrD-like helicase C-terminal domain maps to 551 to 914 (PEAVGAGKGG…RVMSIHRAKG (364 aa)). 2 disordered regions span residues 778–797 (QEPW…KAVP) and 1132–1165 (AGKT…QDET). Residues 787–796 (GPGAAAGKAV) show a composition bias toward low complexity.

This sequence belongs to the helicase family. AddA subfamily. As to quaternary structure, heterodimer of AddA and AddB/RexB. Mg(2+) serves as cofactor.

It carries out the reaction Couples ATP hydrolysis with the unwinding of duplex DNA by translocating in the 3'-5' direction.. It catalyses the reaction ATP + H2O = ADP + phosphate + H(+). The heterodimer acts as both an ATP-dependent DNA helicase and an ATP-dependent, dual-direction single-stranded exonuclease. Recognizes the chi site generating a DNA molecule suitable for the initiation of homologous recombination. The AddA nuclease domain is required for chi fragment generation; this subunit has the helicase and 3' -&gt; 5' nuclease activities. The chain is ATP-dependent helicase/nuclease subunit A from Moorella thermoacetica (strain ATCC 39073 / JCM 9320).